Consider the following 496-residue polypeptide: Fascin (496 aa).

Belongs to the fascin family.

Its subcellular location is the cytoplasm. It localises to the cytoskeleton. Its function is as follows. Acts as an actin bundling protein. This chain is Fascin, found in Strongylocentrotus purpuratus (Purple sea urchin).